Here is a 209-residue protein sequence, read N- to C-terminus: 3-dehydroquinate dehydratase (209 aa).

3-dehydroquinate-binding positions include Ser-6, 25–27 (ELR), and Arg-55. His-109 functions as the Proton donor/acceptor in the catalytic mechanism. Residue Lys-134 is the Schiff-base intermediate with substrate of the active site. The 3-dehydroquinate site is built by Arg-172 and Gln-195.

It belongs to the type-I 3-dehydroquinase family. As to quaternary structure, homodimer.

It carries out the reaction 3-dehydroquinate = 3-dehydroshikimate + H2O. Its pathway is metabolic intermediate biosynthesis; chorismate biosynthesis; chorismate from D-erythrose 4-phosphate and phosphoenolpyruvate: step 3/7. In terms of biological role, involved in the third step of the chorismate pathway, which leads to the biosynthesis of aromatic amino acids. Catalyzes the cis-dehydration of 3-dehydroquinate (DHQ) and introduces the first double bond of the aromatic ring to yield 3-dehydroshikimate. The protein is 3-dehydroquinate dehydratase of Methanoregula boonei (strain DSM 21154 / JCM 14090 / 6A8).